Reading from the N-terminus, the 303-residue chain is Acetylglutamate kinase (303 aa).

Residues 75-76 (GG), Arg-97, and Asn-194 each bind substrate.

The protein belongs to the acetylglutamate kinase family. ArgB subfamily.

The protein localises to the cytoplasm. It carries out the reaction N-acetyl-L-glutamate + ATP = N-acetyl-L-glutamyl 5-phosphate + ADP. It functions in the pathway amino-acid biosynthesis; L-arginine biosynthesis; N(2)-acetyl-L-ornithine from L-glutamate: step 2/4. Catalyzes the ATP-dependent phosphorylation of N-acetyl-L-glutamate. The chain is Acetylglutamate kinase from Gloeobacter violaceus (strain ATCC 29082 / PCC 7421).